We begin with the raw amino-acid sequence, 2898 residues long: Papilin (2898 aa).

Residues 1–26 (MDLSRRLCSTALVAFIVLASIHDSQS) form the signal peptide. Residues 43-67 (LPESSVTPGGEGNDPDEWTPWSSPS) are disordered. The TSP type-1 1 domain occupies 57 to 111 (PDEWTPWSSPSDCSRTCGGGVSYQTRECLRRDDRGEAVCSGGSRRYFSCNTQDCP). 3 cysteine pairs are disulfide-bonded: C69/C105, C73/C110, and C84/C95. Residues N258 and N319 are each glycosylated (N-linked (GlcNAc...) asparagine). The TSP type-1 2 domain occupies 338–397 (DTHTWTHHQFNACSASCGGGSQSRKVTCNNRITLAEVNPSLCDQKSKPVEEQACGTEPCA). The N-linked (GlcNAc...) asparagine glycan is linked to N419. TSP type-1 domains follow at residues 461–521 (NCPK…TPCE), 522–575 (GVDW…KSPK), 576–633 (CEAQ…QDCE), and 639–694 (CPGE…EACT). Cystine bridges form between C462/C504, C473/C515, and C477/C520. N-linked (GlcNAc...) asparagine glycosylation is present at N669. 2 disordered regions span residues 699–1252 (LPLT…CAKS) and 1323–1367 (GEND…PDTK). 2 stretches are compositionally biased toward acidic residues: residues 708 to 720 (IEDDEEDCDEDGI) and 727 to 738 (LSDDEKSEDVID). Polar residues predominate over residues 768-788 (STGTTFEGSGYDSESTTDSGI). Residues 801–879 (EASTDLSSST…ASASESTDVS (79 aa)) are compositionally biased toward low complexity. Residues N889, N914, N917, N950, and N1064 are each glycosylated (N-linked (GlcNAc...) asparagine). Residues 890 to 1053 (ASDSTPESST…SDNTDITTDG (164 aa)) are compositionally biased toward low complexity. Residues 1064–1073 (NASTEGSTEG) are compositionally biased toward polar residues. 2 stretches are compositionally biased toward low complexity: residues 1076–1091 (EDTTISTESSGSTEST) and 1104–1215 (STVE…IWST). Basic residues predominate over residues 1237–1248 (SKPRKCKPKKST). Over residues 1330–1351 (PETTTVPPTTTTEETQPETTTE) the composition is skewed to low complexity. 2 N-linked (GlcNAc...) asparagine glycosylation sites follow: N1489 and N1623. Cystine bridges form between C1612-C1662, C1621-C1645, C1637-C1658, C1671-C1721, C1680-C1704, C1696-C1717, C1730-C1780, C1739-C1763, C1755-C1776, C1790-C1840, C1799-C1823, C1815-C1836, C1849-C1899, C1858-C1882, and C1874-C1895. 5 consecutive BPTI/Kunitz inhibitor domains span residues 1612–1662 (CGLP…KDTC), 1671–1721 (CLLP…QGTC), 1730–1780 (CEQP…NYNC), 1790–1840 (CALP…EDHC), and 1849–1899 (CEIP…LARC). N1750 carries N-linked (GlcNAc...) asparagine glycosylation. The interval 1902-1928 (KPEPTTTTPATRPQPSRQDVCDEEPAP) is disordered. The segment covering 1905–1916 (PTTTTPATRPQP) has biased composition (low complexity). 3 disulfides stabilise this stretch: C1922–C1972, C1931–C1955, and C1947–C1968. The BPTI/Kunitz inhibitor 6 domain maps to 1922–1972 (CDEEPAPGECSTWVLKWHFDRKIGACRQFYYGNCGGNGNRFETENDCQQRC). The interval 1972–2004 (CLSQEPPAPTPPRAPAPTRQPDPAPTVAQCSQP) is disordered. The segment covering 1977–1995 (PPAPTPPRAPAPTRQPDPA) has biased composition (pro residues). Intrachain disulfides connect C2001–C2051, C2010–C2034, C2026–C2047, C2071–C2121, C2080–C2104, C2096–C2117, C2128–C2178, C2137–C2161, C2153–C2174, C2194–C2244, C2203–C2227, C2219–C2240, C2253–C2303, C2262–C2286, C2278–C2299, C2318–C2371, C2327–C2354, and C2346–C2367. BPTI/Kunitz inhibitor domains lie at 2001–2051 (CSQP…SARC), 2071–2121 (CFLA…QNEC), 2128–2178 (CALP…LNFC), 2194–2244 (CAEP…ERQC), 2253–2303 (CNEP…QTVC), and 2318–2371 (CLLP…TNQC). N2020 carries an N-linked (GlcNAc...) asparagine glycan. N-linked (GlcNAc...) asparagine glycosylation is present at N2083. An N-linked (GlcNAc...) asparagine glycan is attached at N2205. In terms of domain architecture, WAP spans 2452–2498 (DIYKPGECPALSANASGCARECYTDADCRGDNKCCSDGCGQLCVHPA). 3 N-linked (GlcNAc...) asparagine glycosylation sites follow: N2465, N2552, and N2625. 3 consecutive Ig-like C2-type domains span residues 2523-2607 (PKEA…REVA), 2617-2697 (PAYI…RPVS), and 2749-2840 (PTVN…ANVS). A disulfide bridge connects residues C2543 and C2592. Intrachain disulfides connect C2640–C2687 and C2775–C2824. 2 N-linked (GlcNAc...) asparagine glycosylation sites follow: N2784 and N2838. A PLAC domain is found at 2847–2886 (VSPECVDNPYFANCKLIVKGRYCSNPYYTQFCCRSCTLAG).

Belongs to the papilin family. As to quaternary structure, homooligomer; disulfide-linked. N-glycosylated. In terms of processing, sulfated. During embryogenesis it first appears in the extracellular matrix during gastrulation and early mesoderm development at sites where basement membranes do not subsequently form. Later, migrating hemocytes prominently produce it together with other ECM components, in basement membranes that underlie epithelia and envelop muscles and emerging organs. At various life stages, it can be synthesized by other cells, such as those of the fat body, and it also occurs in a few, circumscribed regions of relatively amorphous ECM. Isoform E is specifically expressed in ECM of heart and proventriculus. Isoform C is a major component of transitory ECM deposit in the early embryo. Isoform F is a major component of the basement membrane during embryogenesis.

The protein localises to the secreted. It is found in the extracellular space. It localises to the extracellular matrix. The protein resides in the basement membrane. Essential extracellular matrix (ECM) protein that influences cell rearrangements. May act by modulating metalloproteinases action during organogenesis. Able to non-competitively inhibit procollagen N-proteinase, an ADAMTS metalloproteinase. The chain is Papilin (Ppn) from Drosophila melanogaster (Fruit fly).